Here is a 235-residue protein sequence, read N- to C-terminus: Claudin-16 (235 aa).

Residues 1-3 (MKD) are Cytoplasmic-facing. The chain crosses the membrane as a helical span at residues 4 to 24 (LLQYAACFLAIFSTGFLIVAT). The Extracellular segment spans residues 25-79 (WTDCWMVNADDSLEVSTKCRGLWWECVTNAFDGIRTCDEYDSIYAEHPLKLVVTR). The helical transmembrane segment at 80-100 (ALMITADILAGFGFITLLLGL) threads the bilayer. The Cytoplasmic portion of the chain corresponds to 101-115 (DCVKFLPDDPQIKVR). A helical membrane pass occupies residues 116 to 136 (LCFVAGTTLLIAGTPGIIGSV). Residues 137–169 (WYAVDVYVERSSLVLHNIFLGIQYKFGWSCWLG) are Extracellular-facing. The helical transmembrane segment at 170-190 (MAGSLGCFLAGALLTCCLYLF) threads the bilayer. Residues 191–235 (KDVGPERNYPYAMRKPYSTAGVSMAKSYKAPRTETAKMYAVDTRV) lie on the Cytoplasmic side of the membrane. An Interaction with TJP1 motif is present at residues 233-235 (TRV).

Belongs to the claudin family. Can form heteropolymeric tight junction strands with other claudins. Interacts with CLDN19. Cannot form tight junction strands on its own. Interacts (via PDZ-binding motif TRV) with TJP1 (via PDZ domain). Expressed in the corticomedullary axis of the TAL, specifically in the cortex and the outer stripe of outer medulla (OSOM) zone (at protein level).

The protein resides in the cell junction. Its subcellular location is the tight junction. The protein localises to the cell membrane. It catalyses the reaction Mg(2+)(in) = Mg(2+)(out). It carries out the reaction Ca(2+)(in) = Ca(2+)(out). The catalysed reaction is Na(+)(in) = Na(+)(out). The enzyme catalyses K(+)(in) = K(+)(out). It catalyses the reaction Rb(+)(in) = Rb(+)(out). It carries out the reaction Cs(+)(in) = Cs(+)(out). The catalysed reaction is Li(+)(in) = Li(+)(out). Forms paracellular channels: coassembles with CLDN19 into tight junction strands with cation-selective channels through the strands, conveying epithelial permeability in a process known as paracellular tight junction permeability. Involved in the maintenance of ion gradients along the nephron. In the thick ascending limb (TAL) of Henle's loop, facilitates sodium paracellular permeability from the interstitial compartment to the lumen, contributing to the lumen-positive transepithelial potential that drives paracellular magnesium and calcium reabsorption. This is Claudin-16 from Mus musculus (Mouse).